Here is a 338-residue protein sequence, read N- to C-terminus: Fructose-1,6-bisphosphatase class 1 (338 aa).

Residues Glu90, Asp112, Leu114, and Asp115 each contribute to the Mg(2+) site. Residues 115–118 (DGSS), Asn207, and Lys273 each bind substrate. Position 279 (Glu279) interacts with Mg(2+).

The protein belongs to the FBPase class 1 family. Homotetramer. It depends on Mg(2+) as a cofactor.

The protein localises to the cytoplasm. The enzyme catalyses beta-D-fructose 1,6-bisphosphate + H2O = beta-D-fructose 6-phosphate + phosphate. It participates in carbohydrate biosynthesis; gluconeogenesis. The polypeptide is Fructose-1,6-bisphosphatase class 1 (Stenotrophomonas maltophilia (strain R551-3)).